The primary structure comprises 59 residues: UPF0337 protein MM_2677 (59 aa).

2 stretches are compositionally biased toward basic and acidic residues: residues 1–24 and 33–59; these read MKEG…KESA and MEAK…EFEK. Positions 1-59 are disordered; that stretch reads MKEGTKEEMEGKFSKAKGEIKESAGEMTGDIEMEAKGEAEKRKGEAQEKVGKIRKEFEK.

This sequence belongs to the UPF0337 (CsbD) family.

In Methanosarcina mazei (strain ATCC BAA-159 / DSM 3647 / Goe1 / Go1 / JCM 11833 / OCM 88) (Methanosarcina frisia), this protein is UPF0337 protein MM_2677.